The chain runs to 154 residues: MAARLCCQLDPARDVLCLRPVGAESRGRPFSGPLGTLSSPSPSAVSTDHGAHLSLRGLPVCAFSSAGPCALRFTSARRMETTVNAHQFLPKVLHKRTLGLSVMSTTDLEAYFKDCLFKDWEESGEEIRLMIFVLGGCRHKLVCAPAPCNFFTSA.

Positions proline 68–phenylalanine 117 are mitochondrial targeting sequence.

The protein belongs to the orthohepadnavirus protein X family. In terms of assembly, may form homodimer. May interact with host CEBPA, CFLAR, CREB1, DDB1, E4F1, HBXIP, HSPD1/HSP60, NFKBIA, POLR2E and SMAD4. Interacts with host SMC5-SMC6 complex and induces its degradation. Interacts with host TRPC4AP; leading to prevent ubiquitination of TRPC4AP. Interacts with host PLSCR1; this interaction promotes ubiquitination and degradation of HBx and impairs HBx-mediated cell proliferation. Post-translationally, a fraction may be phosphorylated in insect cells and HepG2 cells, a human hepatoblastoma cell line. Phosphorylated in vitro by host protein kinase C or mitogen-activated protein kinase. N-acetylated in insect cells.

Its subcellular location is the host cytoplasm. It localises to the host nucleus. It is found in the host mitochondrion. Its function is as follows. Multifunctional protein that plays a role in silencing host antiviral defenses and promoting viral transcription. Does not seem to be essential for HBV infection. May be directly involved in development of cirrhosis and liver cancer (hepatocellular carcinoma). Most of cytosolic activities involve modulation of cytosolic calcium. The effect on apoptosis is controversial depending on the cell types in which the studies have been conducted. May induce apoptosis by localizing in mitochondria and causing loss of mitochondrial membrane potential. May also modulate apoptosis by binding host CFLAR, a key regulator of the death-inducing signaling complex (DISC). Promotes viral transcription by using the host E3 ubiquitin ligase DDB1 to target the SMC5-SMC6 complex to proteasomal degradation. This host complex would otherwise bind to viral episomal DNA, and prevents its transcription. Moderately stimulates transcription of many different viral and cellular transcription elements. Promoters and enhancers stimulated by HBx contain DNA binding sites for NF-kappa-B, AP-1, AP-2, c-EBP, ATF/CREB, or the calcium-activated factor NF-AT. The polypeptide is Protein X (Hepatitis B virus genotype D (isolate France/alpha1/1989) (HBV-D)).